The following is a 219-amino-acid chain: Small ribosomal subunit protein uS3 (219 aa).

The KH type-2 domain occupies 41–110 (IRKIINTEYS…DVSINICEVK (70 aa)).

Belongs to the universal ribosomal protein uS3 family. As to quaternary structure, part of the 30S ribosomal subunit. Forms a tight complex with proteins S10 and S14.

In terms of biological role, binds the lower part of the 30S subunit head. Binds mRNA in the 70S ribosome, positioning it for translation. The chain is Small ribosomal subunit protein uS3 from Orientia tsutsugamushi (strain Ikeda) (Rickettsia tsutsugamushi).